A 444-amino-acid polypeptide reads, in one-letter code: Transcription activator AFTR-2 (444 aa).

The segment at residues 16–43 (CDFCTQSKLRCNKNKPSCRRCTLQQQPC) is a DNA-binding region (zn(2)-C6 fungal-type). Residues 49-88 (RRTGRPPKHPRKANDCQEANGQHGDQDPVTSTPGGSYQQQ) are disordered. Residues 50–59 (RTGRPPKHPR) show a composition bias toward basic residues. Residues 76–88 (PVTSTPGGSYQQQ) are compositionally biased toward polar residues.

Its subcellular location is the nucleus. In terms of biological role, transcription factor that regulates the expression of the gene clusters that mediate the biosynthesis of the host-selective toxins (HSTs) AF-toxins responsible for Alternaria black spot of strawberry disease by the strawberry pathotype. On cellular level, AF-toxins affect plasma membrane of susceptible cells and cause a sudden increase in loss of K(+) after a few minutes of toxin treatment. The protein is Transcription activator AFTR-2 of Alternaria alternata (Alternaria rot fungus).